The sequence spans 121 residues: MNNAPHLYFAWQQLVEKSQLMLRLATEEQWDELIASEMAYVNAVQEIAHLTEEVAPSTTMQEQLRPMLLLILDNESKVKQLLQIRMDELAKLVGQSSVQKSVLSAYGDQGGFVLAPQDNLF.

A required for homodimerization region spans residues 1–50 (MNNAPHLYFAWQQLVEKSQLMLRLATEEQWDELIASEMAYVNAVQEIAHL). The tract at residues 60–98 (MQEQLRPMLLLILDNESKVKQLLQIRMDELAKLVGQSSV) is fliD binding.

Belongs to the FliT family. Homodimer. Interacts with FliD and FlhC.

It localises to the cytoplasm. The protein localises to the cytosol. Dual-function protein that regulates the transcription of class 2 flagellar operons and that also acts as an export chaperone for the filament-capping protein FliD. As a transcriptional regulator, acts as an anti-FlhDC factor; it directly binds FlhC, thus inhibiting the binding of the FlhC/FlhD complex to class 2 promoters, resulting in decreased expression of class 2 flagellar operons. As a chaperone, effects FliD transition to the membrane by preventing its premature polymerization, and by directing it to the export apparatus. In Escherichia coli O6:K15:H31 (strain 536 / UPEC), this protein is Flagellar protein FliT.